The following is a 923-amino-acid chain: Alanine--tRNA ligase (923 aa).

Positions 614, 618, 717, and 721 each coordinate Zn(2+). The segment at 884–903 (KVGGGGGGPPDFAQGGGPDA) is disordered. The segment covering 885–901 (VGGGGGGPPDFAQGGGP) has biased composition (gly residues).

The protein belongs to the class-II aminoacyl-tRNA synthetase family. Zn(2+) serves as cofactor.

The protein resides in the cytoplasm. It catalyses the reaction tRNA(Ala) + L-alanine + ATP = L-alanyl-tRNA(Ala) + AMP + diphosphate. Its function is as follows. Catalyzes the attachment of alanine to tRNA(Ala) in a two-step reaction: alanine is first activated by ATP to form Ala-AMP and then transferred to the acceptor end of tRNA(Ala). Also edits incorrectly charged Ser-tRNA(Ala) and Gly-tRNA(Ala) via its editing domain. In Haloquadratum walsbyi (strain DSM 16790 / HBSQ001), this protein is Alanine--tRNA ligase.